We begin with the raw amino-acid sequence, 524 residues long: Serine/threonine-protein phosphatase 2A 56 kDa regulatory subunit gamma isoform (524 aa).

Position 1 is an N-acetylmethionine (M1). A Nuclear localization signal motif is present at residues R472–E489. Residues S476 to R524 are disordered.

Belongs to the phosphatase 2A regulatory subunit B56 family. PP2A consists of a common heterodimeric core enzyme, composed of PPP2CA a 36 kDa catalytic subunit (subunit C) and PPP2R1A a 65 kDa constant regulatory subunit (PR65 or subunit A), that associates with a variety of regulatory subunits. Proteins that associate with the core dimer include three families of regulatory subunits B (the R2/B/PR55/B55, R3/B''/PR72/PR130/PR59 and R5/B'/B56 families), the 48 kDa variable regulatory subunit, viral proteins, and cell signaling molecules. Interacts with SGO1. Interacts with SGO1; the interaction is direct. May interact with TP53. Interacts with IER3 and/or ERK kinases; regulates ERK dephosphorylation Interacts with CIP2A; this interaction stabilizes CIP2A. As to expression, highly expressed in testis, heart and spleen. Also found in brain and skeletal muscle.

The protein resides in the nucleus. It localises to the chromosome. Its subcellular location is the centromere. Functionally, the B regulatory subunit might modulate substrate selectivity and catalytic activity, and might also direct the localization of the catalytic enzyme to a particular subcellular compartment. The PP2A-PPP2R5C holoenzyme may activate TP53 and play a role in DNA damage-induced inhibition of cell proliferation. PP2A-PPP2R5C may also regulate the ERK signaling pathway through ERK dephosphorylation. In Oryctolagus cuniculus (Rabbit), this protein is Serine/threonine-protein phosphatase 2A 56 kDa regulatory subunit gamma isoform (PPP2R5C).